A 1002-amino-acid chain; its full sequence is Inversin-B (1002 aa).

ANK repeat units follow at residues 9 to 39, 43 to 72, 76 to 105, 109 to 140, 144 to 173, 177 to 209, 216 to 246, 250 to 279, 284 to 313, 317 to 346, 352 to 381, 385 to 414, 418 to 447, 451 to 480, 484 to 513, and 519 to 549; these read SLASPIQAAAVTGDKTTLLRLIASSPQVIDQ, LGRTPLMYSVLGDRRSCAEALLKHGAKVNR, SGRTALHLAAQTGNHRLLKLLLSRKADCTH, CDITALHLSTRHQDTQCLVLLLKYTPPGQVDA, RKQTALHWSAYYNRPQHVRLLVRHGSNIGI, EGKIPLHWAAGHKDPEAALTVRCLFEAAPTESL, EGRTPLHLAVGDGNQEVVRLLTSYRGCNVAP, LFRTPLHWAALLGHTPIAHLLLERNNSPNI, QGATPLHYAAQGNCPDTVRVLLSHPSVRDE, EGRTALMWAAGKGSDEVVRTMLELNPKLEV, YGGTALHAASLSGQITTVRILLENRAQADA, MKHTPLFRACEMGHREVIATLIKGGAKVHL, DGRSPLHWAALGGNANVCQILIENNINPDA, EGRTPLQCAAYGGYIGCMEVLMENKADPNI, NGRTALHWSCNNGYLDAVKLLLGYNAFPNQ, and ERYTPLDYALLGGHQEVIQFMLEHGALSIAA. Positions 486 to 494 match the D-box 1 motif; it reads RTALHWSCN. The IQ 1 domain maps to 551 to 580; that stretch reads QDIAAFKIQAVYKGHKVRRAFQERKNLLMK. 3 stretches are compositionally biased toward basic and acidic residues: residues 586–599, 609–621, and 643–656; these read KGAAAKKREGENRQ, KQKDADSMERQNK, and AEDRKGKHREENLE. Disordered stretches follow at residues 586–804 and 862–886; these read KGAA…KGRR and SAKTGQRPLTETHKPPGKACRSSSA. 2 stretches are compositionally biased toward polar residues: residues 670 to 680 and 687 to 706; these read QRITAQIQSSP and NSIQIRTSPSGTSNTQSSPL. 2 stretches are compositionally biased toward basic and acidic residues: residues 733–763 and 770–796; these read HQMESPDVVVHRIEDLIQKESRRKSHREERK and QSSDYRLHTSEKEASDSAIHREEEGKK. The D-box 2 signature appears at 959–967; the sequence is RKQLFQRKN. One can recognise an IQ 2 domain in the interval 966-995; that stretch reads KNHAATVIQKAWRTYWVRKSSCKTRHSRSQ.

As to quaternary structure, interacts with apc2. Binds calmodulin.

Its subcellular location is the cytoplasm. The protein resides in the cytoskeleton. In terms of biological role, required for normal renal development and establishment of left-right axis. Probably acts as a molecular switch between different Wnt signaling pathways. Inhibits the canonical Wnt pathway by targeting cytoplasmic disheveled for degradation by the ubiquitin-proteasome. This suggests that it is required in renal development to oppose the repression of terminal differentiation of tubular epithelial cells by Wnt signaling. Plays a central role in convergent extension movements in gastrulating embryos, a processus regulated by Wnt signaling. In Xenopus laevis (African clawed frog), this protein is Inversin-B (invs-b).